We begin with the raw amino-acid sequence, 397 residues long: Riboflavin biosynthesis protein RibBA (397 aa).

Positions Met1 to His199 are DHBP synthase. Residues Arg26 to Glu27, Asp31, Arg138 to Thr142, and Glu162 contribute to the D-ribulose 5-phosphate site. Glu27 lines the Mg(2+) pocket. Residue His141 coordinates Mg(2+). The tract at residues His200–Leu397 is GTP cyclohydrolase II. Position 250–254 (Arg250–Glu254) interacts with GTP. Zn(2+) contacts are provided by Cys255, Cys266, and Cys268. Residues Gln271, Glu293–Arg295, and Thr315 contribute to the GTP site. Asp327 functions as the Proton acceptor; for GTP cyclohydrolase activity in the catalytic mechanism. Residue Arg329 is the Nucleophile; for GTP cyclohydrolase activity of the active site. GTP contacts are provided by Thr350 and Lys355.

The protein in the N-terminal section; belongs to the DHBP synthase family. It in the C-terminal section; belongs to the GTP cyclohydrolase II family. Mg(2+) is required as a cofactor. Mn(2+) serves as cofactor. The cofactor is Zn(2+).

The enzyme catalyses D-ribulose 5-phosphate = (2S)-2-hydroxy-3-oxobutyl phosphate + formate + H(+). It carries out the reaction GTP + 4 H2O = 2,5-diamino-6-hydroxy-4-(5-phosphoribosylamino)-pyrimidine + formate + 2 phosphate + 3 H(+). The protein operates within cofactor biosynthesis; riboflavin biosynthesis; 2-hydroxy-3-oxobutyl phosphate from D-ribulose 5-phosphate: step 1/1. Its pathway is cofactor biosynthesis; riboflavin biosynthesis; 5-amino-6-(D-ribitylamino)uracil from GTP: step 1/4. Catalyzes the conversion of D-ribulose 5-phosphate to formate and 3,4-dihydroxy-2-butanone 4-phosphate. Functionally, catalyzes the conversion of GTP to 2,5-diamino-6-ribosylamino-4(3H)-pyrimidinone 5'-phosphate (DARP), formate and pyrophosphate. This Bacillus cereus (strain B4264) protein is Riboflavin biosynthesis protein RibBA.